The chain runs to 309 residues: Taste receptor type 2 member 31 (309 aa).

At 1 to 2 (MI) the chain is on the extracellular side. Residues 3–23 (TFLPIIFSILVVVTFVIGNFA) form a helical membrane-spanning segment. Residues 24–55 (NGFIALVNSTEWVKRQKISFADQILTALAVSR) lie on the Cytoplasmic side of the membrane. A helical membrane pass occupies residues 56 to 76 (VGLLWVLLLNWYATVLNPAFY). Residues 77–100 (SVEVRTTTYNVWAVTNHFSNWLAT) lie on the Extracellular side of the membrane. Residues 101-121 (SLSIFYLLKIANFSNLIFLHL) form a helical membrane-spanning segment. The Cytoplasmic portion of the chain corresponds to 122–126 (KRRVK). Residues 127 to 147 (NVILVMLLGPLLILACHLFMV) traverse the membrane as a helical segment. Residues 148 to 181 (NMNEIVRTKEYEENMTWKYILRNAIYHPGMTVTT) are Extracellular-facing. N-linked (GlcNAc...) asparagine glycosylation is present at asparagine 161. Residues 182 to 202 (LQNLVPFTLTLISFLLLICSL) traverse the membrane as a helical segment. The Cytoplasmic segment spans residues 203 to 229 (CKHLKKMQLHGKGPQDPSTKVHIKALQ). The chain crosses the membrane as a helical span at residues 230-250 (IVISFLLLCVIYFVSVIISIW). Over 251 to 259 (SFESLGNKP) the chain is Extracellular. A helical membrane pass occupies residues 260–280 (VFMFCQAIRFSYPSAHPFIVI). Residues 281 to 309 (WGNKKLKQTFLSVLWNVRYWVKGQKPSSL) lie on the Cytoplasmic side of the membrane.

It belongs to the G-protein coupled receptor T2R family.

Its subcellular location is the membrane. Its function is as follows. Receptor that may play a role in the perception of bitterness and is gustducin-linked. May play a role in sensing the chemical composition of the gastrointestinal content. The activity of this receptor may stimulate alpha gustducin, mediate PLC-beta-2 activation and lead to the gating of TRPM5. The polypeptide is Taste receptor type 2 member 31 (TAS2R31) (Papio hamadryas (Hamadryas baboon)).